The sequence spans 505 residues: ATP synthase subunit alpha (505 aa).

Residue 170-177 (GDRQTGKS) participates in ATP binding.

It belongs to the ATPase alpha/beta chains family. As to quaternary structure, F-type ATPases have 2 components, CF(1) - the catalytic core - and CF(0) - the membrane proton channel. CF(1) has five subunits: alpha(3), beta(3), gamma(1), delta(1), epsilon(1). CF(0) has four main subunits: a(1), b(1), b'(1) and c(9-12).

The protein resides in the cellular thylakoid membrane. The catalysed reaction is ATP + H2O + 4 H(+)(in) = ADP + phosphate + 5 H(+)(out). In terms of biological role, produces ATP from ADP in the presence of a proton gradient across the membrane. The alpha chain is a regulatory subunit. In Prochlorococcus marinus (strain AS9601), this protein is ATP synthase subunit alpha.